A 429-amino-acid chain; its full sequence is Adenosylhomocysteinase (429 aa).

Residues T64, D136, and E161 each contribute to the substrate site. An NAD(+)-binding site is contributed by 162–164; the sequence is TTT. 2 residues coordinate substrate: K191 and D195. Residues N196, 225–230, E248, N283, 304–306, and N351 each bind NAD(+); these read GYGWCG and SGH.

This sequence belongs to the adenosylhomocysteinase family. The cofactor is NAD(+).

The protein localises to the cytoplasm. It catalyses the reaction S-adenosyl-L-homocysteine + H2O = L-homocysteine + adenosine. It participates in amino-acid biosynthesis; L-homocysteine biosynthesis; L-homocysteine from S-adenosyl-L-homocysteine: step 1/1. Its function is as follows. May play a key role in the regulation of the intracellular concentration of adenosylhomocysteine. This is Adenosylhomocysteinase from Thermosynechococcus vestitus (strain NIES-2133 / IAM M-273 / BP-1).